The following is a 257-amino-acid chain: Phycoerythrobilin:ferredoxin oxidoreductase (257 aa).

It belongs to the HY2 family.

It catalyses the reaction (3Z)-phycoerythrobilin + oxidized 2[4Fe-4S]-[ferredoxin] = 15,16-dihydrobiliverdin + reduced 2[4Fe-4S]-[ferredoxin] + 2 H(+). Its function is as follows. Catalyzes the two-electron reduction of the C2 and C3(1) diene system of 15,16-dihydrobiliverdin. The sequence is that of Phycoerythrobilin:ferredoxin oxidoreductase (pebB) from Prochlorococcus marinus subsp. pastoris (strain CCMP1986 / NIES-2087 / MED4).